The primary structure comprises 500 residues: Cytochrome P450 71B38 (500 aa).

Residues 3–23 (IFLCFLLLLPLSLILFKKLLP) traverse the membrane as a helical segment. Cysteine 441 is a heme binding site.

The protein belongs to the cytochrome P450 family. It depends on heme as a cofactor.

The protein resides in the membrane. The polypeptide is Cytochrome P450 71B38 (CYP71B38) (Arabidopsis thaliana (Mouse-ear cress)).